The chain runs to 189 residues: Chitin synthase 3 (189 aa).

It belongs to the chitin synthase family. Class II subfamily.

The protein resides in the cell membrane. The enzyme catalyses [(1-&gt;4)-N-acetyl-beta-D-glucosaminyl](n) + UDP-N-acetyl-alpha-D-glucosamine = [(1-&gt;4)-N-acetyl-beta-D-glucosaminyl](n+1) + UDP + H(+). In terms of biological role, polymerizes chitin, a structural polymer of the cell wall and septum, by transferring the sugar moiety of UDP-GlcNAc to the non-reducing end of the growing chitin polymer. The chain is Chitin synthase 3 (CHS3) from Ajellomyces capsulatus (Darling's disease fungus).